The sequence spans 686 residues: Kinesin light chain (686 aa).

Disordered stretches follow at residues 1-23 (MSGS…SQEQ) and 158-204 (KYDE…SVSA). The stretch at 20 to 160 (SQEQIITGTR…EYMNSIKKYD (141 aa)) forms a coiled coil. 6 TPR repeats span residues 215–248 (LRTL…LEKT), 257–290 (ATML…REKT), 299–332 (AATL…REKV), 341–374 (AKQL…YEKK), 383–416 (AKTK…AHER), and 472–505 (TTTL…RRNA). 2 disordered regions span residues 520–558 (QDLS…YEKT) and 586–686 (GYVE…SGNF). Polar residues predominate over residues 675–686 (DNLSSRRQSGNF).

The protein belongs to the kinesin light chain family. In terms of assembly, oligomeric complex composed of two heavy chains and two light chains. In terms of processing, phosphorylation may modulate the process of mechanochemical coupling.

It localises to the cytoplasm. Its subcellular location is the cytoskeleton. Functionally, kinesin is a microtubule-associated force-producing protein that may play a role in organelle transport. The light chain may function in coupling of cargo to the heavy chain or in the modulation of its ATPase activity. The polypeptide is Kinesin light chain (Strongylocentrotus purpuratus (Purple sea urchin)).